The sequence spans 163 residues: Putative 4-hydroxy-4-methyl-2-oxoglutarate aldolase (163 aa).

Substrate is bound by residues G76–L79 and R98. A divalent metal cation is bound at residue D99.

This sequence belongs to the class II aldolase/RraA-like family. As to quaternary structure, homotrimer. It depends on a divalent metal cation as a cofactor.

It carries out the reaction 4-hydroxy-4-methyl-2-oxoglutarate = 2 pyruvate. The catalysed reaction is oxaloacetate + H(+) = pyruvate + CO2. Catalyzes the aldol cleavage of 4-hydroxy-4-methyl-2-oxoglutarate (HMG) into 2 molecules of pyruvate. Also contains a secondary oxaloacetate (OAA) decarboxylase activity due to the common pyruvate enolate transition state formed following C-C bond cleavage in the retro-aldol and decarboxylation reactions. The sequence is that of Putative 4-hydroxy-4-methyl-2-oxoglutarate aldolase from Pseudomonas putida (strain GB-1).